A 341-amino-acid chain; its full sequence is LRP2-binding protein (341 aa).

A TPR repeat occupies 56 to 89 (VQANFLLGQLFFEEGWYEDALLQFEKVKDEDNQA). 6 Sel1-like repeats span residues 90-122 (LYQA…TSDC), 130-165 (YAAA…DNGN), 170-203 (LKAQ…GNGS), 204-239 (LESQ…ERGN), 240-271 (VYAQ…SHDN), and 291-326 (AIAT…QLDA).

The protein localises to the cytoplasm. Its function is as follows. May act as an adapter that regulates LRP2 function. The sequence is that of LRP2-binding protein (lrp2bp) from Xenopus laevis (African clawed frog).